We begin with the raw amino-acid sequence, 321 residues long: MSENNEIEMELPFDSSAITSTEVLDRVNALLTLQDTQNELTEQMEKEILEIEKKYLKKFQPLAEKRFEIVSGKVEPTKEDQQCKAPIQVENLKSVPTDKGIPKFWLHVLQNTEVKDIIEECDIEALEYLVDIKIVQVGDAQDYSLDFHFSENPFFTNTVISKTVKLEEDNELNEIVSTPINWKDGKNFTVQSKKKTVKSKPTKGKAATTTSTTVQEVVPCFFSTFVSPNQDPTSDEEADEIMYIQYQIIAKLKDIVIPEAVNFFLGRASDAEENDYDFGEDFEDEEGEDDDEEDDEEEQTIKKPSGKGKAQPQQPQDCKQQ.

The segment covering 272–298 has biased composition (acidic residues); that stretch reads EENDYDFGEDFEDEEGEDDDEEDDEEE. Residues 272–321 form a disordered region; sequence EENDYDFGEDFEDEEGEDDDEEDDEEEQTIKKPSGKGKAQPQQPQDCKQQ. Low complexity predominate over residues 311-321; sequence QPQQPQDCKQQ.

Belongs to the nucleosome assembly protein (NAP) family.

It localises to the nucleus. May modulate chromatin structure by regulation of histone octamer formation. The chain is Probable nucleosome assembly protein (nap1) from Dictyostelium discoideum (Social amoeba).